A 262-amino-acid polypeptide reads, in one-letter code: Cytochrome c oxidase subunit 3 (262 aa).

6 helical membrane-spanning segments follow: residues 39 to 59, 83 to 103, 120 to 140, 163 to 183, 201 to 221, and 240 to 260; these read YTMT…YQWW, GMIL…WAFF, VGII…ILLA, GLFF…YEYI, ATGF…ICFL, and AWYW…IYWW.

This sequence belongs to the cytochrome c oxidase subunit 3 family. Component of the cytochrome c oxidase (complex IV, CIV), a multisubunit enzyme composed of a catalytic core of 3 subunits and several supernumerary subunits. The complex exists as a monomer or a dimer and forms supercomplexes (SCs) in the inner mitochondrial membrane with ubiquinol-cytochrome c oxidoreductase (cytochrome b-c1 complex, complex III, CIII).

The protein localises to the mitochondrion inner membrane. The catalysed reaction is 4 Fe(II)-[cytochrome c] + O2 + 8 H(+)(in) = 4 Fe(III)-[cytochrome c] + 2 H2O + 4 H(+)(out). Its function is as follows. Component of the cytochrome c oxidase, the last enzyme in the mitochondrial electron transport chain which drives oxidative phosphorylation. The respiratory chain contains 3 multisubunit complexes succinate dehydrogenase (complex II, CII), ubiquinol-cytochrome c oxidoreductase (cytochrome b-c1 complex, complex III, CIII) and cytochrome c oxidase (complex IV, CIV), that cooperate to transfer electrons derived from NADH and succinate to molecular oxygen, creating an electrochemical gradient over the inner membrane that drives transmembrane transport and the ATP synthase. Cytochrome c oxidase is the component of the respiratory chain that catalyzes the reduction of oxygen to water. Electrons originating from reduced cytochrome c in the intermembrane space (IMS) are transferred via the dinuclear copper A center (CU(A)) of subunit 2 and heme A of subunit 1 to the active site in subunit 1, a binuclear center (BNC) formed by heme A3 and copper B (CU(B)). The BNC reduces molecular oxygen to 2 water molecules using 4 electrons from cytochrome c in the IMS and 4 protons from the mitochondrial matrix. In Anopheles quadrimaculatus (Common malaria mosquito), this protein is Cytochrome c oxidase subunit 3 (COIII).